Here is a 325-residue protein sequence, read N- to C-terminus: Tagatose 1,6-diphosphate aldolase 1 (325 aa).

The protein belongs to the aldolase LacD family.

It catalyses the reaction D-tagatofuranose 1,6-bisphosphate = D-glyceraldehyde 3-phosphate + dihydroxyacetone phosphate. It functions in the pathway carbohydrate metabolism; D-tagatose 6-phosphate degradation; D-glyceraldehyde 3-phosphate and glycerone phosphate from D-tagatose 6-phosphate: step 2/2. The sequence is that of Tagatose 1,6-diphosphate aldolase 1 from Streptococcus agalactiae serotype III (strain NEM316).